The chain runs to 49 residues: Large ribosomal subunit protein bL33 (49 aa).

It belongs to the bacterial ribosomal protein bL33 family.

This Finegoldia magna (strain ATCC 29328 / DSM 20472 / WAL 2508) (Peptostreptococcus magnus) protein is Large ribosomal subunit protein bL33.